The following is a 475-amino-acid chain: Probable pectate lyase 7 (475 aa).

A signal peptide spans 1–24 (METARLFKLVCVICIASLIPTIRA). N-linked (GlcNAc...) asparagine glycosylation is found at Asn-67 and Asn-96. Residues 91–117 (ISSPTNSTRRSLTGRGKGKGKGKWSKL) form a disordered region. Ca(2+) contacts are provided by Asp-271, Asp-295, and Asp-299. The active site involves Arg-351.

Belongs to the polysaccharide lyase 1 family. The cofactor is Ca(2+).

It carries out the reaction Eliminative cleavage of (1-&gt;4)-alpha-D-galacturonan to give oligosaccharides with 4-deoxy-alpha-D-galact-4-enuronosyl groups at their non-reducing ends.. Its pathway is glycan metabolism; pectin degradation; 2-dehydro-3-deoxy-D-gluconate from pectin: step 2/5. This Arabidopsis thaliana (Mouse-ear cress) protein is Probable pectate lyase 7.